The following is a 395-amino-acid chain: NKAP-like protein (395 aa).

Disordered stretches follow at residues 1–77 (MSPV…RPLP) and 91–247 (CGGY…ISCK). Phosphoserine is present on residues S23 and S25. Residues 25 to 35 (SPPSALQTSRS) are compositionally biased toward polar residues. The segment covering 109–130 (DQEKEKEESYRQRRLKERERIG) has biased composition (basic and acidic residues). The residue at position 149 (S149) is a Phosphoserine. The span at 150 to 161 (DEHTPAEDEVKN) shows a compositional bias: basic and acidic residues. 2 stretches are compositionally biased toward basic residues: residues 177 to 197 (KTSH…KHKK) and 214 to 238 (KKVK…KRTK).

This sequence belongs to the NKAP family. Interacts with RBPJ, CIR1 and HDAC3. In terms of tissue distribution, specific to testis (at protein level). Detected in differenting spermatogonia and early spermatocytes (at protein level).

Its subcellular location is the nucleus. In terms of biological role, transcriptional repressor of Notch-mediated signaling. Required for spermatogenesis. The polypeptide is NKAP-like protein (Mus musculus (Mouse)).